Here is a 301-residue protein sequence, read N- to C-terminus: Inosose dehydratase (301 aa).

This sequence belongs to the IolE/MocC family. Glutathione is required as a cofactor. Requires Co(2+) as cofactor. The cofactor is Mn(2+).

The catalysed reaction is scyllo-inosose = 3D-3,5/4-trihydroxycyclohexane-1,2-dione + H2O. It participates in polyol metabolism; myo-inositol degradation into acetyl-CoA; acetyl-CoA from myo-inositol: step 2/7. Its function is as follows. Catalyzes the dehydration of inosose (2-keto-myo-inositol, 2KMI or 2,4,6/3,5-pentahydroxycyclohexanone) to 3D-(3,5/4)-trihydroxycyclohexane-1,2-dione (D-2,3-diketo-4-deoxy-epi-inositol). The sequence is that of Inosose dehydratase from Lacticaseibacillus casei (strain BL23) (Lactobacillus casei).